Consider the following 285-residue polypeptide: Hsp90 co-chaperone Cdc37-like 1 (285 aa).

The segment at 34–54 (LHNSESMDQEQAMAQAELSEL) is disordered. Residues 35-73 (HNSESMDQEQAMAQAELSELQRSEEEWRRKEAALSQGEN) adopt a coiled-coil conformation.

Belongs to the CDC37 family. In terms of assembly, forms complexes with Hsp70 and Hsp90.

It is found in the cytoplasm. Functionally, co-chaperone that binds to numerous proteins and promotes their interaction with Hsp70 and Hsp90. This Xenopus tropicalis (Western clawed frog) protein is Hsp90 co-chaperone Cdc37-like 1 (cdc37l1).